The primary structure comprises 249 residues: Diaminopimelate epimerase (249 aa).

Residues Asn-11 and Asn-60 each coordinate substrate. Cys-69 serves as the catalytic Proton donor. Residues 70 to 71 (GN), Asn-164, and 182 to 183 (ER) each bind substrate. Cys-192 (proton acceptor) is an active-site residue. A substrate-binding site is contributed by 193-194 (GT).

It belongs to the diaminopimelate epimerase family. As to quaternary structure, homodimer.

The protein localises to the cytoplasm. It catalyses the reaction (2S,6S)-2,6-diaminopimelate = meso-2,6-diaminopimelate. The protein operates within amino-acid biosynthesis; L-lysine biosynthesis via DAP pathway; DL-2,6-diaminopimelate from LL-2,6-diaminopimelate: step 1/1. In terms of biological role, catalyzes the stereoinversion of LL-2,6-diaminopimelate (L,L-DAP) to meso-diaminopimelate (meso-DAP), a precursor of L-lysine and an essential component of the bacterial peptidoglycan. This is Diaminopimelate epimerase from Campylobacter jejuni subsp. jejuni serotype O:6 (strain 81116 / NCTC 11828).